Reading from the N-terminus, the 335-residue chain is Glyceraldehyde-3-phosphate dehydrogenase 2 (335 aa).

NAD(+) contacts are provided by residues 13–14 (RI), D34, and M79. Residues 151–153 (SCT), T182, 211–212 (TG), and R234 each bind D-glyceraldehyde 3-phosphate. C152 functions as the Nucleophile in the catalytic mechanism. N316 contacts NAD(+).

It belongs to the glyceraldehyde-3-phosphate dehydrogenase family. In terms of assembly, homotetramer.

Its subcellular location is the cytoplasm. The catalysed reaction is D-glyceraldehyde 3-phosphate + phosphate + NAD(+) = (2R)-3-phospho-glyceroyl phosphate + NADH + H(+). The protein operates within carbohydrate degradation; glycolysis; pyruvate from D-glyceraldehyde 3-phosphate: step 1/5. Glyceraldehyde-3-phosphate dehydrogenase is a key enzyme in glycolysis that catalyzes the first step of the pathway by converting D-glyceraldehyde 3-phosphate (G3P) into 3-phospho-D-glyceroyl phosphate. In Danio rerio (Zebrafish), this protein is Glyceraldehyde-3-phosphate dehydrogenase 2 (gapdh-2).